Here is a 321-residue protein sequence, read N- to C-terminus: Lipoyl synthase (321 aa).

The [4Fe-4S] cluster site is built by Cys-68, Cys-73, Cys-79, Cys-94, Cys-98, Cys-101, and Ser-308. The region spanning 80–297 is the Radical SAM core domain; that stretch reads FNHGTATFMI…KAEAMAMGFT (218 aa).

It belongs to the radical SAM superfamily. Lipoyl synthase family. [4Fe-4S] cluster is required as a cofactor.

It is found in the cytoplasm. The catalysed reaction is [[Fe-S] cluster scaffold protein carrying a second [4Fe-4S](2+) cluster] + N(6)-octanoyl-L-lysyl-[protein] + 2 oxidized [2Fe-2S]-[ferredoxin] + 2 S-adenosyl-L-methionine + 4 H(+) = [[Fe-S] cluster scaffold protein] + N(6)-[(R)-dihydrolipoyl]-L-lysyl-[protein] + 4 Fe(3+) + 2 hydrogen sulfide + 2 5'-deoxyadenosine + 2 L-methionine + 2 reduced [2Fe-2S]-[ferredoxin]. The protein operates within protein modification; protein lipoylation via endogenous pathway; protein N(6)-(lipoyl)lysine from octanoyl-[acyl-carrier-protein]: step 2/2. In terms of biological role, catalyzes the radical-mediated insertion of two sulfur atoms into the C-6 and C-8 positions of the octanoyl moiety bound to the lipoyl domains of lipoate-dependent enzymes, thereby converting the octanoylated domains into lipoylated derivatives. The polypeptide is Lipoyl synthase (Klebsiella pneumoniae (strain 342)).